The following is a 354-amino-acid chain: Mitogen-activated protein kinase kinase 1 (354 aa).

A Protein kinase domain is found at Leu-68 to Val-328. Residues Ile-74–Val-82 and Lys-97 contribute to the ATP site. Asp-190 (proton acceptor) is an active-site residue. Thr-218 is subject to Phosphothreonine. A Phosphoserine modification is found at Ser-224. Position 228 is a phosphothreonine (Thr-228).

Belongs to the protein kinase superfamily. STE Ser/Thr protein kinase family. MAP kinase kinase subfamily. As to quaternary structure, interacts with MEKK1 and MPK4. May form a ternary complex composed of MEKK1 and MKK1/MKK2 and MPK4. Interacts with P.syringae type III effector HopF2. Interacts with MPK11. Post-translationally, phosphorylation at Thr-218 and Ser-224 by MAP kinase kinase kinases positively regulates kinase activity. In terms of tissue distribution, expressed in roots, stem, flowers and siliques.

It catalyses the reaction L-seryl-[protein] + ATP = O-phospho-L-seryl-[protein] + ADP + H(+). It carries out the reaction L-threonyl-[protein] + ATP = O-phospho-L-threonyl-[protein] + ADP + H(+). The catalysed reaction is L-tyrosyl-[protein] + ATP = O-phospho-L-tyrosyl-[protein] + ADP + H(+). With respect to regulation, activated through serine and threonine phosphorylation in response to wounding, cold, drought, salt stresses, abscisic acid (ABA), hydrogen peroxide, bacterial flagellin and laminarin beta-glucan. Functionally, MEKK1, MKK1/MKK2 and MPK4/MPK6 function in a signaling pathway that modulates the expression of genes responding to biotic and abiotic stresses and also plays an important role in pathogen defense by negatively regulating innate immunity. Activates by phosphorylation the downstream MPK4. Acts redundantly with MKK2. MKK1-MPK6 module mediates abscisic acid (ABA)-dependent CAT1 expression with H(2)O(2) production and response to drought and salt stress. MKK1-MPK6 module is also involved in sugar signaling during the process of seed germination. This chain is Mitogen-activated protein kinase kinase 1 (MKK1), found in Arabidopsis thaliana (Mouse-ear cress).